Here is a 234-residue protein sequence, read N- to C-terminus: Leucyl/phenylalanyl-tRNA--protein transferase (234 aa).

It belongs to the L/F-transferase family.

Its subcellular location is the cytoplasm. The enzyme catalyses N-terminal L-lysyl-[protein] + L-leucyl-tRNA(Leu) = N-terminal L-leucyl-L-lysyl-[protein] + tRNA(Leu) + H(+). It carries out the reaction N-terminal L-arginyl-[protein] + L-leucyl-tRNA(Leu) = N-terminal L-leucyl-L-arginyl-[protein] + tRNA(Leu) + H(+). The catalysed reaction is L-phenylalanyl-tRNA(Phe) + an N-terminal L-alpha-aminoacyl-[protein] = an N-terminal L-phenylalanyl-L-alpha-aminoacyl-[protein] + tRNA(Phe). Functionally, functions in the N-end rule pathway of protein degradation where it conjugates Leu, Phe and, less efficiently, Met from aminoacyl-tRNAs to the N-termini of proteins containing an N-terminal arginine or lysine. This is Leucyl/phenylalanyl-tRNA--protein transferase from Escherichia coli O7:K1 (strain IAI39 / ExPEC).